Reading from the N-terminus, the 485-residue chain is Pumilio domain-containing protein 7 (485 aa).

A disordered region spans residues 29–72; the sequence is NKTHKNKNPKPPVKLLPYRHGSNTTSSDSDSYIFNSGSGSSDAE. Residues 49-71 show a composition bias toward polar residues; sequence GSNTTSSDSDSYIFNSGSGSSDA. 8 Pumilio repeats span residues 86–124, 128–163, 164–200, 201–236, 237–279, 287–324, 326–361, and 370–411; these read DVLLNGQLIDFAIDPSGVKFLEANYPLDSEDQIRKAVFE, ESTTLFVGLCHSRNGNFIVQKLVELATPAEQRELLR, QMIDGGLLAMCKDKFACRVVQLALQKFDHSNVFQLIQ, ELSTFDLAAMCTDQISIHVIQRVVKQLPVDMWTFFV, HFLS…FRIQ, CIVRNCYRLSSNEFANYVIQYVIKSSGIMEMYRDTIID, CLLRNLLSMSQDKYASHVIEGAFLFAPPALLHEMME, and DVES…RELP. The tract at residues 439–454 is RNA-binding; that stretch reads FSSGKKIIDSVMRHGV.

In terms of biological role, RNA-binding protein that binds to the consensus sequence 5'-CUCUGUAUCUUGU-3' in mRNA 3'-UTRs and modulates mRNA expression and stability. Functions redundantly with puf-5 and puf-6 in oocyte formation and organization, early embryonic cell divisions, and repression of expression of glp-1 and other maternal mRNAs in late oogenesis. This chain is Pumilio domain-containing protein 7, found in Caenorhabditis elegans.